The following is a 186-amino-acid chain: RNA polymerase sigma factor NccH (186 aa).

Positions 49–62 match the Polymerase core binding motif; sequence DIVQDTFIAAWHAL. A DNA-binding region (H-T-H motif) is located at residues 152 to 171; that stretch reads HPEAAMALGTSAKAVESRVA.

This sequence belongs to the sigma-70 factor family. ECF subfamily.

Sigma factors are initiation factors that promote the attachment of RNA polymerase to specific initiation sites and are then released. This sigma factor regulates the genes for a membrane-located efflux system that confers resistance to nickel, cobalt and cadmium. The polypeptide is RNA polymerase sigma factor NccH (nccH) (Alcaligenes xylosoxydans xylosoxydans (Achromobacter xylosoxidans)).